The following is a 116-amino-acid chain: Dynein light chain Tctex-type 3 (116 aa).

Tyrosine 4 is modified (3'-nitrotyrosine).

It belongs to the dynein light chain Tctex-type family. In terms of assembly, homodimer. The cytoplasmic dynein 1 complex consists of two catalytic heavy chains (HCs) and a number of non-catalytic subunits presented by intermediate chains (ICs), light intermediate chains (LICs) and light chains (LCs); the composition seems to vary in respect to the IC, LIC and LC composition. The heavy chain homodimer serves as a scaffold for the probable homodimeric assembly of the respective non-catalytic subunits. The ICs and LICs bind directly to the HC dimer and the LCs assemble on the IC dimer. DYNLT1 and DYNLT3 compete for association with dynein IC (DYNC1I1 or DYNC1I2). Self-associates. Interacts with DYNC1I1 and DYNC1I2. Interacts with BUB3. Interacts with SATB1 in nucleus to form complex with matrix attachment regions (MARs) of DNA.

Its subcellular location is the nucleus. It is found in the cytoplasm. The protein localises to the cytoskeleton. The protein resides in the chromosome. It localises to the centromere. Its subcellular location is the kinetochore. Functionally, acts as one of several non-catalytic accessory components of the cytoplasmic dynein 1 complex that are thought to be involved in linking dynein to cargos and to adapter proteins that regulate dynein function. Cytoplasmic dynein 1 acts as a motor for the intracellular retrograde motility of vesicles and organelles along microtubules. Probably binds BUB3 as part of transport cargo. Required for the efficient progression through mitosis. This Homo sapiens (Human) protein is Dynein light chain Tctex-type 3 (DYNLT3).